A 65-amino-acid polypeptide reads, in one-letter code: Hainantoxin-X-3 (65 aa).

An N-terminal signal peptide occupies residues 1 to 20; it reads MNMKILVLVAVLCLVVSTHA. Residues 21-37 constitute a propeptide that is removed on maturation; it reads ERHSKTDMEDSPMIQER. Cystine bridges form between cysteine 46/cysteine 59 and cysteine 55/cysteine 64.

The protein belongs to the neurotoxin 36 family. 02 subfamily. In terms of tissue distribution, expressed by the venom gland.

The protein localises to the secreted. Reversibly blocks N-type calcium channels (Cav2.2/CACNA1B) in rat dorsal root ganglion cells. Elicits no toxic symptoms in either vertebrates or invertebrates during a period of 48 hours post-injection, when it was assayed in vivo by direct injection into mice and cockroaches. The chain is Hainantoxin-X-3 from Cyriopagopus hainanus (Chinese bird spider).